Here is a 549-residue protein sequence, read N- to C-terminus: Glucose-6-phosphate isomerase (549 aa).

E355 (proton donor) is an active-site residue. Catalysis depends on residues H386 and K514.

This sequence belongs to the GPI family.

The protein localises to the cytoplasm. It carries out the reaction alpha-D-glucose 6-phosphate = beta-D-fructose 6-phosphate. It participates in carbohydrate biosynthesis; gluconeogenesis. It functions in the pathway carbohydrate degradation; glycolysis; D-glyceraldehyde 3-phosphate and glycerone phosphate from D-glucose: step 2/4. Catalyzes the reversible isomerization of glucose-6-phosphate to fructose-6-phosphate. In Salmonella typhi, this protein is Glucose-6-phosphate isomerase.